A 464-amino-acid chain; its full sequence is Alpha-amylase (464 aa).

Residues M1–A21 form the signal peptide. Substrate-binding residues include H107 and R213. Residue D215 is the Nucleophile of the active site. Residue K218 to H219 coordinates substrate. E242 functions as the Proton donor in the catalytic mechanism. Positions 247 and 313 each coordinate substrate.

This sequence belongs to the glycosyl hydrolase 13 family.

The protein localises to the secreted. It catalyses the reaction Endohydrolysis of (1-&gt;4)-alpha-D-glucosidic linkages in polysaccharides containing three or more (1-&gt;4)-alpha-linked D-glucose units.. The polypeptide is Alpha-amylase (Aeromonas hydrophila).